Reading from the N-terminus, the 139-residue chain is Trafficking protein particle complex subunit 2-like protein (139 aa).

This sequence belongs to the TRAPP small subunits family. Sedlin subfamily.

It localises to the cytoplasm. The protein resides in the perinuclear region. The protein localises to the endoplasmic reticulum. It is found in the golgi apparatus. May play a role in vesicular transport from endoplasmic reticulum to Golgi. The sequence is that of Trafficking protein particle complex subunit 2-like protein (TRAPPC2L) from Taeniopygia guttata (Zebra finch).